A 348-amino-acid polypeptide reads, in one-letter code: Protein RecA (348 aa).

66–73 (GPESSGKT) contributes to the ATP binding site.

The protein belongs to the RecA family.

It localises to the cytoplasm. Functionally, can catalyze the hydrolysis of ATP in the presence of single-stranded DNA, the ATP-dependent uptake of single-stranded DNA by duplex DNA, and the ATP-dependent hybridization of homologous single-stranded DNAs. It interacts with LexA causing its activation and leading to its autocatalytic cleavage. In Burkholderia lata (strain ATCC 17760 / DSM 23089 / LMG 22485 / NCIMB 9086 / R18194 / 383), this protein is Protein RecA.